A 1030-amino-acid chain; its full sequence is FACT complex subunit spt-16 (1030 aa).

Residues 424 to 445 (RLKSNVIKFKEEQENREAEKDN) are a coiled coil. Composition is skewed to basic and acidic residues over residues 435 to 449 (EQEN…DQKK) and 464 to 477 (TRNK…RKER). Disordered stretches follow at residues 435 to 477 (EQEN…RKER) and 491 to 514 (ARLS…SYKT). Residues 623–645 (RLIKEMQKRFKTEEAEEREKEGA) adopt a coiled-coil conformation. Residues 927–1030 (VESDNEEAMD…KSGPSHKRRK (104 aa)) form a disordered region. Composition is skewed to acidic residues over residues 929–951 (SDNE…EEDA) and 958–983 (ESDE…DSDE). The stretch at 987 to 1007 (KDWSDLEEEAANADKRREVEE) forms a coiled coil. Positions 998-1014 (NADKRREVEEPSRDRDR) are enriched in basic and acidic residues. Over residues 1015-1030 (KRPHSSKSGPSHKRRK) the composition is skewed to basic residues.

This sequence belongs to the peptidase M24 family. SPT16 subfamily. As to quaternary structure, component of the FACT complex, a stable heterodimer of spt-16 and hmg-3 or hmg-4. As to expression, expressed in the germline and somatic cells.

It localises to the nucleus. Its subcellular location is the chromosome. Its function is as follows. Component of the FACT complex, a general chromatin factor that acts to reorganize nucleosomes. The FACT complex is involved in multiple processes that require DNA as a template such as mRNA elongation, DNA replication and DNA repair. During transcription elongation the FACT complex acts as a histone chaperone that both destabilizes and restores nucleosomal structure. It facilitates the passage of RNA polymerase II and transcription by promoting the dissociation of one histone H2A-H2B dimer from the nucleosome, then subsequently promotes the reestablishment of the nucleosome following the passage of RNA polymerase II. In embryos, promotes cell cycle progression and chromosomal segregation. Plays a role in the development of the anterior pharynx during embryonic development. The sequence is that of FACT complex subunit spt-16 from Caenorhabditis elegans.